The following is a 306-amino-acid chain: Oxygen-dependent coproporphyrinogen-III oxidase (306 aa).

Substrate is bound at residue Ser-94. A divalent metal cation is bound by residues His-98 and His-108. The active-site Proton donor is His-108. 110–112 (NVR) serves as a coordination point for substrate. A divalent metal cation-binding residues include His-147 and His-177. The interval 242–277 (YVEFNLVYDRGTLFGLQTGGRTESILMSMPPLVRWQ) is important for dimerization. 260–262 (GGR) provides a ligand contact to substrate.

It belongs to the aerobic coproporphyrinogen-III oxidase family. In terms of assembly, homodimer. A divalent metal cation is required as a cofactor.

The protein resides in the cytoplasm. It carries out the reaction coproporphyrinogen III + O2 + 2 H(+) = protoporphyrinogen IX + 2 CO2 + 2 H2O. It functions in the pathway porphyrin-containing compound metabolism; protoporphyrin-IX biosynthesis; protoporphyrinogen-IX from coproporphyrinogen-III (O2 route): step 1/1. Involved in the heme biosynthesis. Catalyzes the aerobic oxidative decarboxylation of propionate groups of rings A and B of coproporphyrinogen-III to yield the vinyl groups in protoporphyrinogen-IX. This Shewanella sediminis (strain HAW-EB3) protein is Oxygen-dependent coproporphyrinogen-III oxidase.